A 555-amino-acid polypeptide reads, in one-letter code: E3 ubiquitin-protein ligase NEURL1B (555 aa).

The NHR 1 domain maps to 38-194; that stretch reads APRFHAQAKG…ITDEVQLLES (157 aa). A Phosphothreonine modification is found at Thr199. An NHR 2 domain is found at 279 to 433; sequence DLRFHATRGP…GVAGQLRLLG (155 aa). A disordered region spans residues 436 to 493; that stretch reads QSSPATTTPSGSLSGSQDDSDSDMTFSVNQSSSASESSLVTAPSSPLSPPVSPVFSPP. Residues 462–480 are compositionally biased toward low complexity; that stretch reads SVNQSSSASESSLVTAPSS. Pro residues predominate over residues 481 to 493; it reads PLSPPVSPVFSPP. The segment at 503 to 543 adopts an RING-type zinc-finger fold; sequence CTVCFDGEVDTVIYTCGHMCLCHSCGLRLKRQARACCPICR.

Interacts with JAG1, DLL1 and DLL4. Highest expression in brain, prostate and small intestine. In the brain the levels are higher in fetal than in adult stage. In the adult brain the highest levels are detected in the olfactory system, cerebellar cortex, optic nerve and the frontal lobe.

Its subcellular location is the cytoplasm. The enzyme catalyses S-ubiquitinyl-[E2 ubiquitin-conjugating enzyme]-L-cysteine + [acceptor protein]-L-lysine = [E2 ubiquitin-conjugating enzyme]-L-cysteine + N(6)-ubiquitinyl-[acceptor protein]-L-lysine.. It functions in the pathway protein modification; protein ubiquitination. Its function is as follows. E3 ubiquitin-protein ligase involved in regulation of the Notch pathway through influencing the stability and activity of several Notch ligands. The sequence is that of E3 ubiquitin-protein ligase NEURL1B (NEURL1B) from Homo sapiens (Human).